Consider the following 216-residue polypeptide: FMN-dependent NADH:quinone oxidoreductase 2 (216 aa).

FMN contacts are provided by residues serine 9, 15 to 17 (SVS), 96 to 99 (MYNF), and 140 to 143 (SRGG).

It belongs to the azoreductase type 1 family. As to quaternary structure, homodimer. The cofactor is FMN.

It catalyses the reaction 2 a quinone + NADH + H(+) = 2 a 1,4-benzosemiquinone + NAD(+). The enzyme catalyses N,N-dimethyl-1,4-phenylenediamine + anthranilate + 2 NAD(+) = 2-(4-dimethylaminophenyl)diazenylbenzoate + 2 NADH + 2 H(+). Its function is as follows. Quinone reductase that provides resistance to thiol-specific stress caused by electrophilic quinones. Functionally, also exhibits azoreductase activity. Catalyzes the reductive cleavage of the azo bond in aromatic azo compounds to the corresponding amines. This is FMN-dependent NADH:quinone oxidoreductase 2 from Xanthomonas euvesicatoria pv. vesicatoria (strain 85-10) (Xanthomonas campestris pv. vesicatoria).